The sequence spans 611 residues: Threonine--tRNA ligase (611 aa).

The tract at residues 1–145 is editing domain; the sequence is MRLLLIHSDH…TILPGEGAAA (145 aa). The interval 195–487 is catalytic; the sequence is VHVDLMRAKE…TAAQEVPSFP (293 aa). 3 residues coordinate Zn(2+): C287, H339, and H460.

This sequence belongs to the class-II aminoacyl-tRNA synthetase family. Homodimer. The cofactor is Zn(2+).

The protein resides in the cytoplasm. The enzyme catalyses tRNA(Thr) + L-threonine + ATP = L-threonyl-tRNA(Thr) + AMP + diphosphate + H(+). Its function is as follows. Catalyzes the attachment of threonine to tRNA(Thr) in a two-step reaction: L-threonine is first activated by ATP to form Thr-AMP and then transferred to the acceptor end of tRNA(Thr). Also edits incorrectly charged L-seryl-tRNA(Thr). This chain is Threonine--tRNA ligase, found in Methanoculleus marisnigri (strain ATCC 35101 / DSM 1498 / JR1).